The following is a 117-amino-acid chain: Large ribosomal subunit protein uL18 (117 aa).

It belongs to the universal ribosomal protein uL18 family. In terms of assembly, part of the 50S ribosomal subunit; part of the 5S rRNA/L5/L18/L25 subcomplex. Contacts the 5S and 23S rRNAs.

In terms of biological role, this is one of the proteins that bind and probably mediate the attachment of the 5S RNA into the large ribosomal subunit, where it forms part of the central protuberance. The chain is Large ribosomal subunit protein uL18 from Alkalilimnicola ehrlichii (strain ATCC BAA-1101 / DSM 17681 / MLHE-1).